Reading from the N-terminus, the 1538-residue chain is Phenolphthiocerol/phthiocerol polyketide synthase subunit B (1538 aa).

A Ketosynthase family 3 (KS3) domain is found at 33–455 (AEPVAVVGIG…GTNAHVIIEQ (423 aa)). Catalysis depends on for beta-ketoacyl synthase activity residues Cys-205, His-340, and His-377. Residues 553-882 (DGSPGPGTVF…TNLYTADIAH (330 aa)) are acyltransferase. The active-site For malonyltransferase activity is Ser-649. 1153–1196 (SQLVIGATGNIGPHLIRQLARMGAKTIVAMARKPGALDELTQCL) is a binding site for NADP(+). The segment at 1153–1328 (SQLVIGATGN…TVVDWGLWKS (176 aa)) is beta-ketoacyl reductase. A Carrier domain is found at 1423 to 1498 (DMLFDHVGAL…SLTDYLATVL (76 aa)). Position 1458 is an O-(pantetheine 4'-phosphoryl)serine (Ser-1458).

Requires NADP(+) as cofactor. Pantetheine 4'-phosphate serves as cofactor.

It catalyses the reaction icosanoyl-[(phenol)carboxyphthiodiolenone synthase] + 2 (S)-methylmalonyl-CoA + 3 malonyl-CoA + 5 NADPH + 10 H(+) = C32-carboxyphthiodiolenone-[(phenol)carboxyphthiodiolenone synthase] + 5 CO2 + 5 NADP(+) + 5 CoA + 2 H2O. The enzyme catalyses docosanoyl-[(phenol)carboxyphthiodiolenone synthase] + 2 (S)-methylmalonyl-CoA + 3 malonyl-CoA + 5 NADPH + 10 H(+) = C34-carboxyphthiodiolenone-[(phenol)carboxyphthiodiolenone synthase] + 5 CO2 + 5 NADP(+) + 5 CoA + 2 H2O. It carries out the reaction 17-(4-hydroxyphenyl)heptadecanoyl-[(phenol)carboxyphthiodiolenone synthase] + 2 (S)-methylmalonyl-CoA + 3 malonyl-CoA + 5 NADPH + 10 H(+) = C35-(phenol)carboxyphthiodiolenone-[(phenol)carboxyphthiodiolenone synthase] + 5 CO2 + 5 NADP(+) + 5 CoA + 2 H2O. The catalysed reaction is 19-(4-hydroxyphenyl)nonadecanoyl-[(phenol)carboxyphthiodiolenone synthase] + 2 (S)-methylmalonyl-CoA + 3 malonyl-CoA + 5 NADPH + 10 H(+) = C37-(phenol)carboxyphthiodiolenone-[(phenol)carboxyphthiodiolenone synthase] + 5 CO2 + 5 NADP(+) + 5 CoA + 2 H2O. The protein operates within lipid metabolism; fatty acid biosynthesis. Functionally, part of the PpsABCDE complex involved in the biosynthesis of the lipid core common to phthiocerols and phenolphthiocerols by successive additions of malonyl-CoA or methylmalonyl-CoA extender units. PpsA can accept as substrate the activated forms of either icosanoyl (C20), docosanoyl (C22) or lignoceroyl (C24) groups from FadD26, or a (4-hydroxyphenyl)-C17 or (4-hydroxyphenyl)-C19 fatty acyl from FadD29. PpsA initiates the biosynthesis and extends its substrate using a malonyl-CoA extender unit. The PpsB and PpsC proteins add the second and third malonyl-CoA extender units. PpsD adds an (R)-methylmalonyl unit and PpsE adds a second (R)-methylmalonyl unit. The incorporation of the methylmalonyl units results in formation of two branched methyl groups in the elongated product. The polypeptide is Phenolphthiocerol/phthiocerol polyketide synthase subunit B (ppsB) (Mycobacterium bovis (strain ATCC BAA-935 / AF2122/97)).